The primary structure comprises 96 residues: Putative pterin-4-alpha-carbinolamine dehydratase (96 aa).

The protein belongs to the pterin-4-alpha-carbinolamine dehydratase family.

The enzyme catalyses (4aS,6R)-4a-hydroxy-L-erythro-5,6,7,8-tetrahydrobiopterin = (6R)-L-erythro-6,7-dihydrobiopterin + H2O. The sequence is that of Putative pterin-4-alpha-carbinolamine dehydratase from Prochlorococcus marinus (strain MIT 9313).